Consider the following 120-residue polypeptide: BolA-like protein 2 (120 aa).

Belongs to the BolA/IbaG family. As to quaternary structure, interacts with FRA1, GRX3 and GRX4.

It is found in the cytoplasm. It localises to the nucleus. Functionally, involved in the regulation of the iron regulon in response to decreased mitochondrial iron-sulfur cluster synthesis. May be involved in mitochondrial organization and biogenesis. The chain is BolA-like protein 2 (BOL2) from Saccharomyces cerevisiae (strain ATCC 204508 / S288c) (Baker's yeast).